The chain runs to 171 residues: ATP synthase subunit b (171 aa).

Residues 10-30 traverse the membrane as a helical segment; that stretch reads GLYYGDSIFYAVCFLLLMWII.

Belongs to the ATPase B chain family. F-type ATPases have 2 components, F(1) - the catalytic core - and F(0) - the membrane proton channel. F(1) has five subunits: alpha(3), beta(3), gamma(1), delta(1), epsilon(1). F(0) has three main subunits: a(1), b(2) and c(10-14). The alpha and beta chains form an alternating ring which encloses part of the gamma chain. F(1) is attached to F(0) by a central stalk formed by the gamma and epsilon chains, while a peripheral stalk is formed by the delta and b chains.

The protein localises to the cell membrane. Its function is as follows. F(1)F(0) ATP synthase produces ATP from ADP in the presence of a proton or sodium gradient. F-type ATPases consist of two structural domains, F(1) containing the extramembraneous catalytic core and F(0) containing the membrane proton channel, linked together by a central stalk and a peripheral stalk. During catalysis, ATP synthesis in the catalytic domain of F(1) is coupled via a rotary mechanism of the central stalk subunits to proton translocation. Component of the F(0) channel, it forms part of the peripheral stalk, linking F(1) to F(0). This is ATP synthase subunit b from Levilactobacillus brevis (strain ATCC 367 / BCRC 12310 / CIP 105137 / JCM 1170 / LMG 11437 / NCIMB 947 / NCTC 947) (Lactobacillus brevis).